The following is a 1197-amino-acid chain: Protein timeless homolog (1197 aa).

Residues 1 to 309 (MDLYMMNCEL…GLHNLQNYSS (309 aa)) are required for homodimerization and for interaction with CRY1 and CHEK1. Residue Ser-281 is modified to Phosphoserine. 2 disordered regions span residues 647 to 674 (STPL…EELQ) and 943 to 1002 (RKKL…SAEN). The span at 656-673 (PEEGDAEEEEEEEEEEEL) shows a compositional bias: acidic residues. Residues 810-949 (SHRAPLWSPE…KKRRKKLAPS (140 aa)) form a DNA-binding domain region. The span at 963-985 (QEDPEEEDEHLPEDESEDEESEE) shows a compositional bias: acidic residues. Residues 986–999 (GLPSGQGQGSSSLS) are compositionally biased toward low complexity. The tract at residues 997–1095 (SLSAENLGES…TQLRRVAASL (99 aa)) is interaction with PARP1. A phosphoserine mark is found at Ser-1071 and Ser-1084. A required for nuclear localization region spans residues 1079-1197 (IPAKLSSTQL…KRFQIEDEDD (119 aa)). Thr-1086 bears the Phosphothreonine mark. The tract at residues 1088–1197 (LRRVAASLSQ…KRFQIEDEDD (110 aa)) is disordered. Composition is skewed to acidic residues over residues 1099 to 1109 (ENEEEREEEPE) and 1143 to 1153 (TEEEATGEEEW). Position 1165 is a phosphoserine (Ser-1165).

It belongs to the timeless family. In terms of assembly, monomer. Homodimer or homomultimer. Component of the circadian core oscillator, which includes the CRY proteins, CLOCK or NPAS2, ARTNL/BMAL1 or ARTNL2/BMAL2, CSKN1D and/or CSNK1E, TIMELESS, and the PER proteins. Interacts directly with PER2; the interaction with PER2 is via its second PAS domain. Interacts directly with PER1 and PER3. Interacts with CRY1. Interacts with CRY2. Interacts with CHEK1, ATR and ATRIP. Interacts with CLSPN. Interacts (via N-terminus) with TIPIN. The TIMELESS-TIPIN heterodimer binds preferably to guanine-rich quadruplex-forming (G4) DNA structures. Associates with the MCM2-7 complex. Interacts with DNA polymerases alpha, delta and epsilon. Interacts with DDX11; this interaction increases recruitment of both proteins onto chromatin in response to replication stress induction by hydroxyurea. Interacts with PARP1; interaction is direct and independent of poly-ADP-ribose. In terms of tissue distribution, predominantly and robustly expressed in proliferative organs (spleen, thymus, intestine and testis) compared to those more differentiated such as kidney and liver (at protein level). Expressed in all tissues examined including brain, heart, lung, liver, skeletal muscle, kidney, placenta, pancreas, spleen, thymus and testis. Strongly expressed in the suprachiasmatic nucleus (SCN) and pars tuberalis, moderately in the cingulate cortex, pyrimidal cell layer of the piriform cortex, periventricular part of the caudate putamen, and granular layer of the cerebellum, and weakly in the cerebral cortex, gyrus dentatus, hippocampus and thalamic nuclei. In embryonic kidney, expression is highest in regions of active ureteric bud cell branching.

The protein localises to the nucleus. It localises to the chromosome. In terms of biological role, plays an important role in the control of DNA replication, maintenance of replication fork stability, maintenance of genome stability throughout normal DNA replication, DNA repair and in the regulation of the circadian clock. Required to stabilize replication forks during DNA replication by forming a complex with TIPIN: this complex regulates DNA replication processes under both normal and stress conditions, stabilizes replication forks and influences both CHEK1 phosphorylation and the intra-S phase checkpoint in response to genotoxic stress. During DNA replication, inhibits the CMG complex ATPase activity and activates DNA polymerases catalytic activities, coupling DNA unwinding and DNA synthesis. TIMELESS promotes TIPIN nuclear localization. Plays a role in maintaining processive DNA replication past genomic guanine-rich DNA sequences that form G-quadruplex (G4) structures, possibly together with DDX1. Involved in cell survival after DNA damage or replication stress by promoting DNA repair. In response to double-strand breaks (DSBs), accumulates at DNA damage sites and promotes homologous recombination repair via its interaction with PARP1. May be specifically required for the ATR-CHEK1 pathway in the replication checkpoint induced by hydroxyurea or ultraviolet light. Involved in the determination of period length and in the DNA damage-dependent phase advancing of the circadian clock. Negatively regulates CLOCK|NPAS2-ARTNL/BMAL1|ARTNL2/BMAL2-induced transactivation of PER1 possibly via translocation of PER1 into the nucleus. May also play an important role in epithelial cell morphogenesis and formation of branching tubules. The polypeptide is Protein timeless homolog (Mus musculus (Mouse)).